Here is a 404-residue protein sequence, read N- to C-terminus: MAKRRSWFGWMKRLFICEAKARAEKKPRRLRWVFKRLKLRPQLATCGQETRTLNEATQDQRKHAMNVAIATAAAAEAAVAAAKAAAEVVRMAGNAFTSQHFVKKLAPNVAAIKIQSAFRASLARKALRALKALVRLQAIVRGRAVRRKVSALLKSSHSNKASTSNIIQRQTERKHWSNTKSEIKEELQVSNHSLCNSKVKCNGWDSSALTKEDIKAIWLRKQEGVIKRDRMLKYSRSQRERRSPHMLVESLYAKDMGMRSCRLEHWGESKSAKSINSFLIPSEMLVPTKVKLRSLQRQDSGDGQDSPFSFPRRSFSRLEQSILEDESWFQRSNGFQPYMSVTESAREKMRSLSTPRQRVGIMDSLFDNYKKDGDKVSLWSTFVCENSKINNAKKSSLTTYQHNC.

The calmodulin-binding stretch occupies residues 8 to 25 (FGWMKRLFICEAKARAEK). Residues 11 to 18 (MKRLFICE) carry the Nuclear localization signal 1 motif. IQ domains lie at 108-135 (NVAA…ALVR) and 136-158 (LQAI…SSHS). The short motif at 226–233 (IKRDRMLK) is the Nuclear localization signal 2 element.

It belongs to the IQD family. As to quaternary structure, binds to multiple calmodulin (CaM) in the presence of Ca(2+) and CaM-like proteins.

It is found in the nucleus. The protein resides in the cell membrane. In terms of biological role, may be involved in cooperative interactions with calmodulins or calmodulin-like proteins. Recruits calmodulin proteins to microtubules, thus being a potential scaffold in cellular signaling and trafficking. May associate with nucleic acids and regulate gene expression at the transcriptional or post-transcriptional level. The chain is Protein IQ-DOMAIN 12 from Arabidopsis thaliana (Mouse-ear cress).